A 312-amino-acid polypeptide reads, in one-letter code: Beta-ketoacyl-[acyl-carrier-protein] synthase III (312 aa).

Catalysis depends on residues Cys112 and His237. Residues 238-242 (QANIR) form an ACP-binding region. The active site involves Asn267.

This sequence belongs to the thiolase-like superfamily. FabH family. Homodimer.

It is found in the cytoplasm. The catalysed reaction is malonyl-[ACP] + acetyl-CoA + H(+) = 3-oxobutanoyl-[ACP] + CO2 + CoA. The protein operates within lipid metabolism; fatty acid biosynthesis. Its function is as follows. Catalyzes the condensation reaction of fatty acid synthesis by the addition to an acyl acceptor of two carbons from malonyl-ACP. Catalyzes the first condensation reaction which initiates fatty acid synthesis and may therefore play a role in governing the total rate of fatty acid production. Possesses both acetoacetyl-ACP synthase and acetyl transacylase activities. Its substrate specificity determines the biosynthesis of branched-chain and/or straight-chain of fatty acids. This is Beta-ketoacyl-[acyl-carrier-protein] synthase III from Listeria welshimeri serovar 6b (strain ATCC 35897 / DSM 20650 / CCUG 15529 / CIP 8149 / NCTC 11857 / SLCC 5334 / V8).